The primary structure comprises 430 residues: Tol-Pal system protein TolB (430 aa).

Residues 1 to 21 (MKQAFRVALGFLILWASVLHA) form the signal peptide.

This sequence belongs to the TolB family. The Tol-Pal system is composed of five core proteins: the inner membrane proteins TolA, TolQ and TolR, the periplasmic protein TolB and the outer membrane protein Pal. They form a network linking the inner and outer membranes and the peptidoglycan layer.

It is found in the periplasm. In terms of biological role, part of the Tol-Pal system, which plays a role in outer membrane invagination during cell division and is important for maintaining outer membrane integrity. TolB occupies a key intermediary position in the Tol-Pal system because it communicates directly with both membrane-embedded components, Pal in the outer membrane and TolA in the inner membrane. The sequence is that of Tol-Pal system protein TolB from Serratia proteamaculans (strain 568).